Reading from the N-terminus, the 74-residue chain is MKLSNEQYDVAKNVVTVVVPAAIALITGLGALYQFDTTAITGTIALLATFAGTVLGVSSRNYQKEQEAQNNEVE.

2 consecutive transmembrane segments (helical) span residues 15-35 (VTVV…LYQF) and 37-57 (TTAI…VLGV).

As to quaternary structure, homomultimer.

The protein resides in the host cell inner membrane. Accumulates harmlessly in the cytoplasmic membrane until it reaches a critical concentration that triggers the formation of micron-scale pores (holes) causing host cell membrane disruption and endolysin escape into the periplasmic space. Determines the precise timing of host cell lysis. Participates with the endolysin protein in the sequential events which lead to the programmed host cell lysis releasing the mature viral particles from the host cell. The polypeptide is Holin (dph) (Streptococcus pneumoniae (Bacteriophage Dp-1)).